Here is a 455-residue protein sequence, read N- to C-terminus: GTPase Der (455 aa).

2 consecutive EngA-type G domains span residues 4 to 169 and 178 to 353; these read PVVA…PPKD and IQMS…EQHR. Residues 10 to 17, 57 to 61, 120 to 123, 184 to 191, 231 to 235, and 296 to 299 each bind GTP; these read GRPNVGKS, DTGGL, NKCE, DTAGI, and NKWD. Residues 354 to 439 form the KH-like domain; sequence RRVTTSVVNE…PLKLFWRGKQ (86 aa).

Belongs to the TRAFAC class TrmE-Era-EngA-EngB-Septin-like GTPase superfamily. EngA (Der) GTPase family. Associates with the 50S ribosomal subunit.

Its function is as follows. GTPase that plays an essential role in the late steps of ribosome biogenesis. This is GTPase Der from Synechococcus sp. (strain CC9902).